A 599-amino-acid polypeptide reads, in one-letter code: Sulfite reductase [NADPH] flavoprotein alpha-component (599 aa).

Positions 64 to 202 (ITIISASQTG…AASEWRARVV (139 aa)) constitute a Flavodoxin-like domain. Residues 70–75 (SQTGNA), 117–120 (STQG), and 153–162 (LGDSSYEFFC) each bind FMN. The FAD-binding FR-type domain maps to 234-448 (DSPLVASLSV…IEHNDNFRLP (215 aa)). FAD contacts are provided by residues threonine 322, alanine 356, 386–389 (RLYS), 404–406 (TVG), tyrosine 410, and 419–422 (GGAS). NADP(+) contacts are provided by residues 519-520 (SR), 525-529 (KVYVQ), and aspartate 561. Position 599 (tyrosine 599) interacts with FAD.

It belongs to the NADPH-dependent sulphite reductase flavoprotein subunit CysJ family. In the N-terminal section; belongs to the flavodoxin family. This sequence in the C-terminal section; belongs to the flavoprotein pyridine nucleotide cytochrome reductase family. In terms of assembly, alpha(8)-beta(8). The alpha component is a flavoprotein, the beta component is a hemoprotein. It depends on FAD as a cofactor. Requires FMN as cofactor.

The catalysed reaction is hydrogen sulfide + 3 NADP(+) + 3 H2O = sulfite + 3 NADPH + 4 H(+). It functions in the pathway sulfur metabolism; hydrogen sulfide biosynthesis; hydrogen sulfide from sulfite (NADPH route): step 1/1. Functionally, component of the sulfite reductase complex that catalyzes the 6-electron reduction of sulfite to sulfide. This is one of several activities required for the biosynthesis of L-cysteine from sulfate. The flavoprotein component catalyzes the electron flow from NADPH -&gt; FAD -&gt; FMN to the hemoprotein component. The polypeptide is Sulfite reductase [NADPH] flavoprotein alpha-component (Escherichia coli O9:H4 (strain HS)).